Consider the following 283-residue polypeptide: 5'-nucleotidase SurE (283 aa).

4 residues coordinate a divalent metal cation: Asp-14, Asp-15, Ser-47, and Asn-105.

Belongs to the SurE nucleotidase family. It depends on a divalent metal cation as a cofactor.

Its subcellular location is the cytoplasm. The enzyme catalyses a ribonucleoside 5'-phosphate + H2O = a ribonucleoside + phosphate. Nucleotidase that shows phosphatase activity on nucleoside 5'-monophosphates. This chain is 5'-nucleotidase SurE, found in Chlamydia trachomatis serovar D (strain ATCC VR-885 / DSM 19411 / UW-3/Cx).